The chain runs to 354 residues: Ubiquinol oxidase 1a, mitochondrial (354 aa).

The N-terminal 62 residues, 1–62 (MMITRGGAKA…RAPTIGGMRF (62 aa)), are a transit peptide targeting the mitochondrion. Residues 68–99 (LGEKTPMKEEDANQKKTENESTGGDAAGGNNK) are disordered. Basic and acidic residues predominate over residues 72–86 (TPMKEEDANQKKTEN). The chain crosses the membrane as a helical span at residues 179–199 (AMMLETVAAVPGMVGGMLLHC). Positions 183, 222, and 225 each coordinate Fe cation. The chain crosses the membrane as a helical span at residues 241-261 (ALVITVQGVFFNAYFLGYLIS). Residues glutamate 273, glutamate 324, and histidine 327 each coordinate Fe cation.

Belongs to the alternative oxidase family. As to quaternary structure, homodimer; disulfide-linked. The cofactor is Fe cation. Expressed in roots, stems, cotyledons, leaves and flowers. High expression in sepals.

It is found in the mitochondrion inner membrane. It carries out the reaction 2 a ubiquinol + O2 = 2 a ubiquinone + 2 H2O. With respect to regulation, when the two monomeric subunits are covalently linked by a S-S bond, the enzyme is essentially inactive. When the disulfide bond is reduced, its component sulfhydryls can associate with K-keto acids through formation of a thiohemiacetal, resulting in enzyme activation. Activated by glyoxylate, irrespective to the substitution found at Cys-127. That suggests the presence of a second activation site, possibly Cys-177. Catalyzes the cyanide-resistant oxidation of ubiquinol and the reduction of molecular oxygen to water, but does not translocate protons and consequently is not linked to oxidative phosphorylation. Increases respiration when the cytochrome respiratory pathway is restricted, or in response to low temperatures. In Arabidopsis thaliana (Mouse-ear cress), this protein is Ubiquinol oxidase 1a, mitochondrial (AOX1A).